The sequence spans 454 residues: GTPase Der (454 aa).

2 EngA-type G domains span residues 4 to 167 and 188 to 363; these read AIVA…SEDK and LELA…ASWQ. GTP is bound by residues 10–17, 56–60, 121–124, 194–201, 241–245, and 306–309; these read GKPNVGKS, DTPGL, NKTE, GRPNCGKS, DTAGV, and NKWD. Positions 364 to 450 constitute a KH-like domain; that stretch reads KRVTTGTLNQ…PVRLSFVKGK (87 aa).

It belongs to the TRAFAC class TrmE-Era-EngA-EngB-Septin-like GTPase superfamily. EngA (Der) GTPase family. In terms of assembly, associates with the 50S ribosomal subunit.

Its function is as follows. GTPase that plays an essential role in the late steps of ribosome biogenesis. This Orientia tsutsugamushi (strain Ikeda) (Rickettsia tsutsugamushi) protein is GTPase Der.